The primary structure comprises 372 residues: Queuine tRNA-ribosyltransferase (372 aa).

Asp92 serves as the catalytic Proton acceptor. Residues 92–96 (DSGGY), Asp146, Gln188, and Gly215 each bind substrate. The interval 246 to 252 (GIGSLRE) is RNA binding. The Nucleophile role is filled by Asp265. Residues 270 to 274 (TRLGR) form an RNA binding; important for wobble base 34 recognition region. Residues Cys303, Cys305, Cys308, and His334 each coordinate Zn(2+).

This sequence belongs to the queuine tRNA-ribosyltransferase family. In terms of assembly, homodimer. Within each dimer, one monomer is responsible for RNA recognition and catalysis, while the other monomer binds to the replacement base PreQ1. Zn(2+) is required as a cofactor.

The enzyme catalyses 7-aminomethyl-7-carbaguanine + guanosine(34) in tRNA = 7-aminomethyl-7-carbaguanosine(34) in tRNA + guanine. The protein operates within tRNA modification; tRNA-queuosine biosynthesis. Its function is as follows. Catalyzes the base-exchange of a guanine (G) residue with the queuine precursor 7-aminomethyl-7-deazaguanine (PreQ1) at position 34 (anticodon wobble position) in tRNAs with GU(N) anticodons (tRNA-Asp, -Asn, -His and -Tyr). Catalysis occurs through a double-displacement mechanism. The nucleophile active site attacks the C1' of nucleotide 34 to detach the guanine base from the RNA, forming a covalent enzyme-RNA intermediate. The proton acceptor active site deprotonates the incoming PreQ1, allowing a nucleophilic attack on the C1' of the ribose to form the product. After dissociation, two additional enzymatic reactions on the tRNA convert PreQ1 to queuine (Q), resulting in the hypermodified nucleoside queuosine (7-(((4,5-cis-dihydroxy-2-cyclopenten-1-yl)amino)methyl)-7-deazaguanosine). This Prochlorococcus marinus (strain MIT 9312) protein is Queuine tRNA-ribosyltransferase.